A 610-amino-acid chain; its full sequence is ABC transporter ATP-binding protein/permease wht-3 (610 aa).

The 236-residue stretch at valine 42 to lysine 277 folds into the ABC transporter domain. Glycine 74–threonine 81 is an ATP binding site. 5 helical membrane passes run alanine 396–methionine 416, leucine 446–leucine 466, isoleucine 477–leucine 497, leucine 503–glycine 523, and valine 584–isoleucine 604.

The protein belongs to the ABC transporter superfamily. ABCG family. Eye pigment precursor importer (TC 3.A.1.204) subfamily.

The protein localises to the membrane. Required for efficient RNA interference (RNAi) of pop-1 indicating a role in the germline development. This is ABC transporter ATP-binding protein/permease wht-3 (wht-3) from Caenorhabditis elegans.